Here is a 383-residue protein sequence, read N- to C-terminus: Microtubule-associated protein tau (383 aa).

Residues 1-27 (MAEPRQEFDVMEDHAGTYGLGDRKDQE) are compositionally biased toward basic and acidic residues. A disordered region spans residues 1–198 (MAEPRQEFDV…PVPMPDLKNV (198 aa)). Alanine 2 is modified (N-acetylalanine). Phosphotyrosine occurs at positions 18 and 29. A Glycyl lysine isopeptide (Lys-Gly) (interchain with G-Cter in ubiquitin) cross-link involves residue lysine 44. Threonine 53 is modified (phosphothreonine). A compositionally biased stretch (basic and acidic residues) spans 72 to 91 (KSKDGTGSDDKKAKGADGKT). A Phosphothreonine modification is found at threonine 95. Position 97 is an omega-N-methylarginine (arginine 97). N6,N6-dimethyllysine; alternate is present on lysine 105. Lysine 105 bears the N6-acetyllysine; alternate mark. 3 positions are modified to phosphothreonine: threonine 111, threonine 117, and threonine 123. Residues 116-128 (KTPPAPKTPPSSG) show a composition bias toward pro residues. A phosphoserine mark is found at serine 127, serine 133, and serine 137. Residues 129–156 (EPPKSGDRSGYSSPGSPGTPGSRSRTPS) are compositionally biased toward low complexity. Phosphotyrosine is present on tyrosine 139. Serine 140, serine 141, and serine 144 each carry phosphoserine. Residues threonine 147 and threonine 154 each carry the phosphothreonine modification. A Phosphoserine modification is found at serine 156. Threonine 159 is modified (phosphothreonine). Lysine 167 bears the N6-acetyllysine mark. Residue threonine 173 is modified to Phosphothreonine. A phosphoserine mark is found at serine 177 and serine 179. 4 Tau/MAP repeats span residues 186-216 (QTAP…GGGK), 217-247 (VQII…GGGS), 248-278 (VQIV…GGGQ), and 279-310 (VEVK…GGGN). Lysine 196 is covalently cross-linked (Glycyl lysine isopeptide (Lys-Gly) (interchain with G-Cter in ubiquitin)). Position 201 is an N6-acetyllysine; alternate (lysine 201). Position 201 is an N6-methyllysine; alternate (lysine 201). Residue lysine 201 forms a Glycyl lysine isopeptide (Lys-Gly) (interchain with G-Cter in ubiquitin); alternate linkage. Serine 204 carries the phosphoserine modification. Lysine 209 participates in a covalent cross-link: Glycyl lysine isopeptide (Lys-Gly) (interchain with G-Cter in ubiquitin). Lysine 223 is subject to N6-acetyllysine; alternate. Lysine 223 participates in a covalent cross-link: Glycyl lysine isopeptide (Lys-Gly) (interchain with G-Cter in ubiquitin); alternate. 2 positions are modified to phosphoserine: serine 227 and serine 231. Position 232 is an N6-acetyllysine (lysine 232). A disulfide bridge connects residues cysteine 233 and cysteine 264. Residue serine 235 is modified to Phosphoserine. The residue at position 240 (lysine 240) is an N6-acetyllysine; alternate. Residue lysine 240 forms a Glycyl lysine isopeptide (Lys-Gly) (interchain with G-Cter in ubiquitin); alternate linkage. Position 247 is a phosphoserine (serine 247). Residue lysine 253 is modified to N6,N6-dimethyllysine; alternate. 3 positions are modified to N6-acetyllysine; alternate: lysine 253, lysine 259, and lysine 263. Glycyl lysine isopeptide (Lys-Gly) (interchain with G-Cter in ubiquitin); alternate cross-links involve residues lysine 253, lysine 259, and lysine 263. Position 266 is a phosphoserine (serine 266). Residues lysine 273, lysine 285, and lysine 289 each carry the N6-acetyllysine; alternate modification. Glycyl lysine isopeptide (Lys-Gly) (interchain with G-Cter in ubiquitin); alternate cross-links involve residues lysine 273, lysine 285, and lysine 289. Arginine 291 carries the post-translational modification Omega-N-methylarginine. Serine 294 is subject to Phosphoserine. Lysine 295 participates in a covalent cross-link: Glycyl lysine isopeptide (Lys-Gly) (interchain with G-Cter in ubiquitin). Phosphoserine is present on serine 298. At lysine 311 the chain carries N6-acetyllysine; alternate. A Glycyl lysine isopeptide (Lys-Gly) (interchain with G-Cter in ubiquitin); alternate cross-link involves residue lysine 311. Residue lysine 317 forms a Glycyl lysine isopeptide (Lys-Gly) (interchain with G-Cter in ubiquitin) linkage. Position 327 is an N6-acetyllysine; alternate (lysine 327). Residue lysine 327 forms a Glycyl lysine isopeptide (Lys-Gly) (interchain with G-Cter in ubiquitin); alternate linkage. Residue tyrosine 336 is modified to Phosphotyrosine. Residues serine 338 and serine 342 each carry the phosphoserine modification. The disordered stretch occupies residues 340–359 (VVSGDTSPRHLSNVSSTGSI). Over residues 343–358 (GDTSPRHLSNVSSTGS) the composition is skewed to polar residues. Threonine 345 is subject to Phosphothreonine. Residues serine 346, serine 351, serine 358, and serine 364 each carry the phosphoserine modification. A Phosphothreonine modification is found at threonine 369.

As to quaternary structure, interacts with MARK1, MARK2, MARK3 and MARK4. Interacts with SQSTM1 when polyubiquitinated. Interacts with PSMC2 through SQSTM1. Interacts with FKBP4. Binds to CSNK1D. Interacts with SGK1. Interacts with PIN1. Interacts with LRRK2. Interacts with LRP1, leading to endocytosis; this interaction is reduced in the presence of LRPAP1/RAP. In terms of processing, polyubiquitinated. Requires functional TRAF6 and may provoke SQSTM1-dependent degradation by the proteasome. Post-translationally, phosphorylation at various serine and threonine residues in S-P or T-P motifs by proline-directed protein kinases (PDPK1, CDK1, CDK5, GSK3, MAPK) (a few sites per protein in interphase, more in mitosis), and at serine residues in K-X-G-S motifs by MAP/microtubule affinity-regulating kinase (MARK1, MARK2, MARK3 or MARK4), causing detachment from microtubules, and their disassembly. Phosphorylation at Ser-204 by BRSK1 and BRSK2 in neurons affects ability to bind microtubules and plays a role in neuron polarization. Phosphorylated by PHK. Dephosphorylation at several serine and threonine residues by the serine/threonine phosphatase PPP5C. In terms of tissue distribution, expressed in neurons.

It is found in the cytoplasm. The protein localises to the cytosol. Its subcellular location is the cell membrane. The protein resides in the cytoskeleton. It localises to the cell projection. It is found in the axon. The protein localises to the dendrite. Functionally, promotes microtubule assembly and stability, and might be involved in the establishment and maintenance of neuronal polarity. The C-terminus binds axonal microtubules while the N-terminus binds neural plasma membrane components, suggesting that tau functions as a linker protein between both. Axonal polarity is predetermined by tau localization (in the neuronal cell) in the domain of the cell body defined by the centrosome. The polypeptide is Microtubule-associated protein tau (MAPT) (Papio hamadryas (Hamadryas baboon)).